A 394-amino-acid chain; its full sequence is NAD(P)H-quinone oxidoreductase subunit H (394 aa).

Belongs to the complex I 49 kDa subunit family. NDH-1 can be composed of about 15 different subunits; different subcomplexes with different compositions have been identified which probably have different functions.

The protein resides in the cellular thylakoid membrane. The catalysed reaction is a plastoquinone + NADH + (n+1) H(+)(in) = a plastoquinol + NAD(+) + n H(+)(out). It catalyses the reaction a plastoquinone + NADPH + (n+1) H(+)(in) = a plastoquinol + NADP(+) + n H(+)(out). Its function is as follows. NDH-1 shuttles electrons from an unknown electron donor, via FMN and iron-sulfur (Fe-S) centers, to quinones in the respiratory and/or the photosynthetic chain. The immediate electron acceptor for the enzyme in this species is believed to be plastoquinone. Couples the redox reaction to proton translocation, and thus conserves the redox energy in a proton gradient. Cyanobacterial NDH-1 also plays a role in inorganic carbon-concentration. The polypeptide is NAD(P)H-quinone oxidoreductase subunit H (Synechococcus sp. (strain ATCC 27144 / PCC 6301 / SAUG 1402/1) (Anacystis nidulans)).